A 380-amino-acid polypeptide reads, in one-letter code: Cytochrome b (380 aa).

Helical transmembrane passes span 33-53, 77-98, 113-133, and 178-198; these read SGSLLGLCLITQILTGLFLAM, WLIRNIHANGASFFFICLYLHV, WNIGVVLLLLTMMTAFVGYVL, and FFAFHFLLPFVIAGASMIHLL. 2 residues coordinate heme b: His83 and His97. Positions 182 and 196 each coordinate heme b. An a ubiquinone-binding site is contributed by His201. The next 4 membrane-spanning stretches (helical) occupy residues 226–246, 288–308, 320–340, and 347–367; these read YKDLLGFILMLIGLTAIALFS, LGGVLALLFSILVLMLVPILH, LSQILFWTLVADMLVLTWIGG, and FVLIGQVASTIYFALFLIALP.

It belongs to the cytochrome b family. In terms of assembly, the cytochrome bc1 complex contains 3 respiratory subunits (MT-CYB, CYC1 and UQCRFS1), 2 core proteins (UQCRC1 and UQCRC2) and probably 6 low-molecular weight proteins. Heme b serves as cofactor.

It localises to the mitochondrion inner membrane. In terms of biological role, component of the ubiquinol-cytochrome c reductase complex (complex III or cytochrome b-c1 complex) that is part of the mitochondrial respiratory chain. The b-c1 complex mediates electron transfer from ubiquinol to cytochrome c. Contributes to the generation of a proton gradient across the mitochondrial membrane that is then used for ATP synthesis. The chain is Cytochrome b (mt-cyb) from Polyodon spathula (North American paddlefish).